The following is a 510-amino-acid chain: Maturase K (510 aa).

Belongs to the intron maturase 2 family. MatK subfamily.

The protein localises to the plastid. The protein resides in the chloroplast. Usually encoded in the trnK tRNA gene intron. Probably assists in splicing its own and other chloroplast group II introns. In Taxus cuspidata (Japanese yew), this protein is Maturase K.